We begin with the raw amino-acid sequence, 377 residues long: Sterol 24-C-methyltransferase erg6 (377 aa).

It belongs to the class I-like SAM-binding methyltransferase superfamily. Erg6/SMT family.

It is found in the microsome. The protein resides in the mitochondrion. The enzyme catalyses lanosterol + S-adenosyl-L-methionine = eburicol + S-adenosyl-L-homocysteine + H(+). The protein operates within steroid metabolism; ergosterol biosynthesis. With respect to regulation, specific and total activity is decreased in presence of alpha-bisabolol. Functionally, sterol 24-C-methyltransferase; part of the third module of ergosterol biosynthesis pathway that includes the late steps of the pathway. Methylates lanosterol at C-24 to produce eburicol. The third module or late pathway involves the ergosterol synthesis itself through consecutive reactions that mainly occur in the endoplasmic reticulum (ER) membrane. Firstly, the squalene synthase erg9 catalyzes the condensation of 2 farnesyl pyrophosphate moieties to form squalene, which is the precursor of all steroids. Squalene synthase is crucial for balancing the incorporation of farnesyl diphosphate (FPP) into sterol and nonsterol isoprene synthesis. Secondly, squalene is converted into lanosterol by the consecutive action of the squalene epoxidase erg1 and the lanosterol synthase erg7. Then, the delta(24)-sterol C-methyltransferase erg6 methylates lanosterol at C-24 to produce eburicol. Eburicol is the substrate of the sterol 14-alpha demethylase encoded by cyp51A and cyp51B, to yield 4,4,24-trimethyl ergosta-8,14,24(28)-trienol. The C-14 reductase erg24 then reduces the C14=C15 double bond which leads to 4,4-dimethylfecosterol. A sequence of further demethylations at C-4, involving the C-4 demethylation complex containing the C-4 methylsterol oxidases erg25A or erg25B, the sterol-4-alpha-carboxylate 3-dehydrogenase erg26 and the 3-keto-steroid reductase erg27, leads to the production of fecosterol via 4-methylfecosterol. The C-8 sterol isomerase erg2 then catalyzes the reaction which results in unsaturation at C-7 in the B ring of sterols and thus converts fecosterol to episterol. The sterol-C5-desaturase erg3B then catalyzes the introduction of a C-5 double bond in the B ring to produce 5-dehydroepisterol. The 2 other sterol-C5-desaturases, erg3A and erg3C, seem to be less important in ergosterol biosynthesis. The C-22 sterol desaturase erg5 further converts 5-dehydroepisterol into ergosta-5,7,22,24(28)-tetraen-3beta-ol by forming the C-22(23) double bond in the sterol side chain. Finally, ergosta-5,7,22,24(28)-tetraen-3beta-ol is substrate of the C-24(28) sterol reductases erg4A and erg4B to produce ergosterol. Possible alternative sterol biosynthetic pathways might exist from fecosterol to ergosterol, depending on the activities of the erg3 isoforms. The polypeptide is Sterol 24-C-methyltransferase erg6 (Aspergillus fumigatus (strain ATCC MYA-4609 / CBS 101355 / FGSC A1100 / Af293) (Neosartorya fumigata)).